A 369-amino-acid polypeptide reads, in one-letter code: Somatostatin receptor type 2 (369 aa).

Over 1-43 (MDMAYELLNGSQPWLSSPFDLNGSVATANSSNQTEPYYDLTSN) the chain is Extracellular. 4 N-linked (GlcNAc...) asparagine glycosylation sites follow: N9, N22, N29, and N32. A helical membrane pass occupies residues 44–67 (AVLTFIYFVVCIIGLCGNTLVIYV). The Cytoplasmic segment spans residues 68–78 (ILRYAKMKTIT). The helical transmembrane segment at 79–103 (NIYILNLAIADELFMLGLPFLAMQV) threads the bilayer. Over 104–118 (ALVHWPFGKAICRVV) the chain is Extracellular. An intrachain disulfide couples C115 to C193. A helical membrane pass occupies residues 119–138 (MTVDGINQFTSIFCLTVMSI). The Cytoplasmic segment spans residues 139-161 (DRYLAVVHPIKSAKWRRPRTAKM). Residues 162-181 (INVAVWGVSLLVILPIMIYA) traverse the membrane as a helical segment. Residues 182–207 (GLRSNQWGRSSCTINWPGESGAWYTG) lie on the Extracellular side of the membrane. Residues 208 to 229 (FIIYAFILGFLVPLTIICLCYL) form a helical membrane-spanning segment. Topologically, residues 230–253 (FIIIKVKSSGIRVGSSKRKKSEKK) are cytoplasmic. A helical transmembrane segment spans residues 254–278 (VTRMVSIVVAVFIFCWLPFYIFNVS). The Extracellular portion of the chain corresponds to 279–288 (SVSVAISPTP). The helical transmembrane segment at 289 to 303 (ALKGMFDFVVVLTYA) threads the bilayer. Residues 304–369 (NSCANPILYA…LLNGDLQTSI (66 aa)) are Cytoplasmic-facing. C328 is lipidated: S-palmitoyl cysteine. 3 positions are modified to phosphoserine: S341, S343, and S348. Phosphothreonine occurs at positions 353 and 354.

It belongs to the G-protein coupled receptor 1 family. Homodimer and heterodimer with SSTR3 and SSTR5. Heterodimerization with SSTR3 inactivates SSTR3 receptor function. Heterodimerization with SSTR5 is enhanced by agonist stimulation of SSTR2 and increases SSTR2 cell growth inhibition activity. Following agonist stimulation, homodimers dissociate into monomers which is required for receptor internalization. Interacts with beta-arrestin; this interaction is necessary for receptor internalization and is destabilized by heterodimerization with SSTR5 which results in increased recycling of SSTR2 to the cell surface. Interacts (via C-terminus) with SHANK1 (via PDZ domain). Post-translationally, phosphorylated on serine and threonine residues in response to agonist stimulation, leading to receptor desensitization and rapid internalization. Phosphorylated to a greater extent on serine than threonine residues. Threonine phosphorylation is required for arrestin binding and receptor endocytosis but is not necessary for desensitization.

It is found in the cell membrane. The protein localises to the cytoplasm. Functionally, receptor for somatostatin-14 and -28. This receptor is coupled via pertussis toxin sensitive G proteins to inhibition of adenylyl cyclase. In addition it stimulates phosphotyrosine phosphatase and PLC via pertussis toxin insensitive as well as sensitive G proteins. Inhibits calcium entry by suppressing voltage-dependent calcium channels. Acts as the functionally dominant somatostatin receptor in pancreatic alpha- and beta-cells where it mediates the inhibitory effect of somatostatin-14 on hormone secretion. Inhibits cell growth through enhancement of MAPK1 and MAPK2 phosphorylation and subsequent up-regulation of CDKN1B. Stimulates neuronal migration and axon outgrowth and may participate in neuron development and maturation during brain development. Mediates negative regulation of insulin receptor signaling through PTPN6. Inactivates SSTR3 receptor function following heterodimerization. In Sus scrofa (Pig), this protein is Somatostatin receptor type 2 (SSTR2).